A 395-amino-acid chain; its full sequence is Protein-arginine rhamnosyltransferase (395 aa).

DTDP-beta-L-rhamnose-binding positions include 19 to 22, Y205, Q272, and 288 to 292; these read NYGD and RGEDS. D22 serves as the catalytic Proton acceptor. E290 is an active-site residue.

This sequence belongs to the glycosyltransferase 104 family.

It carries out the reaction dTDP-beta-L-rhamnose + L-arginyl-[protein] = N(omega)-(alpha-L-rhamnosyl)-L-arginyl-[protein] + dTDP + H(+). Functionally, protein-arginine rhamnosyltransferase that catalyzes the transfer of a single rhamnose to elongation factor P (EF-P) on 'Lys-32', a modification required for EF-P-dependent rescue of polyproline stalled ribosomes. This Shewanella oneidensis (strain ATCC 700550 / JCM 31522 / CIP 106686 / LMG 19005 / NCIMB 14063 / MR-1) protein is Protein-arginine rhamnosyltransferase.